Here is a 100-residue protein sequence, read N- to C-terminus: Suppressor of silencing 2b (100 aa).

A Nuclear localization signal motif is present at residues K22–R27.

Belongs to the cucumovirus/ilarvirus protein 2b family. As to quaternary structure, homotetramer. Interacts with host AGO1; this interaction blocks AGO1 cleavage activity to attenuate RNA silencing and thus counter host defense. Interacts with host JAZ.

It localises to the host nucleus. Functionally, multifunctional protein that plays two independent roles: viral suppressor of host RNAi (VSR) and viral inducer of host attractiveness to insect vectors (VIA). Acts as a suppressor of RNA-mediated gene silencing, also known as post-transcriptional gene silencing (PTGS), a mechanism of plant viral defense that limits the accumulation of viral RNAs. May directly interfere with mobile silencing signaling. Also inhibits signal transduction by the phytohormone jasmonate, making the infected plant more attractive to aphids, which are the second host to play a role as a dissemination vector. Acts by binding to and inhibiting JAZ degradation in the host. This Cucumis sativus (Cucumber) protein is Suppressor of silencing 2b.